The following is a 66-amino-acid chain: Conotoxin Lt5.6 (66 aa).

The N-terminal stretch at 1 to 19 (MLCLPVFIILLLLASPAAP) is a signal peptide. The propeptide occupies 20-54 (KSLETRIQNDLIRAGLTDADLKTEKGFLSGLLNVA).

This sequence belongs to the conotoxin T superfamily. Post-translationally, contains 2 disulfide bonds that can be either 'C1-C3, C2-C4' or 'C1-C4, C2-C3', since these disulfide connectivities have been observed for conotoxins with cysteine framework V (for examples, see AC P0DQQ7 and AC P81755). As to expression, expressed by the venom duct.

It localises to the secreted. In Conus litteratus (Lettered cone), this protein is Conotoxin Lt5.6.